A 516-amino-acid polypeptide reads, in one-letter code: Protein DML1 (516 aa).

This sequence belongs to the misato family.

The protein localises to the mitochondrion. Involved in the partitioning of the mitochondrial organelle and mitochondrial DNA (mtDNA) inheritance. This chain is Protein DML1 (DML1), found in Coccidioides immitis (strain RS) (Valley fever fungus).